The following is a 246-amino-acid chain: Probable transcriptional regulatory protein APP7_1210 (246 aa).

The protein belongs to the TACO1 family.

It is found in the cytoplasm. The sequence is that of Probable transcriptional regulatory protein APP7_1210 from Actinobacillus pleuropneumoniae serotype 7 (strain AP76).